Reading from the N-terminus, the 254-residue chain is Protein EFFECTOR OF TRANSCRIPTION 3 (254 aa).

The GIY-YIG domain maps to 103–152; sequence RCTGLYELGVGVIGQDQGQNFDPDNNVLGVYVGQCVDVKSRLQDYGRRGG.

The protein localises to the cytoplasm. The sequence is that of Protein EFFECTOR OF TRANSCRIPTION 3 from Arabidopsis thaliana (Mouse-ear cress).